We begin with the raw amino-acid sequence, 529 residues long: MKKIMLVFITLILVSLPIAQQTEAKDASAFHKENLISSMAPPASPPASPKTPIEKKHADEIDKYIQGLDYNKNNVLVYHGDAVTNVPPRKGYKDGNEYIVVEKKKKSINQNNADIQVVNAISSLTYPGALVKANSELVENQPDVLPVKRDSLTLSIDLPGMTNQDNKIVVKNATKSNVNNAVNTLVERWNEKYAQAYPNVSAKIDYDDEMAYSESQLIAKFGTAFKAVNNSLNVNFGAISEGKMQEEVISFKQIYYNVNVNEPTRPSRFFGKAVTKEQLQALGVNAENPPAYISSVAYGRQVYLKLSTNSHSTKVKAAFDAAVSGKSVSGDVELTNIIKNSSFKAVIYGGSAKDEVQIIDGNLGDLRDILKKGATFNRETPGVPIAYTTNFLKDNELAVIKNNSEYIETTSKAYTDGKINIDHSGGYVAQFNISWDEINYDPEGNEIVQHKNWSENNKSKLAHFTSSIYLPGNARNINVYAKECTGLAWEWWRTVIDDRNLPLVKNRNISIWGTTLYPKYSNSVDNPIE.

Positions 1–24 are cleaved as a signal peptide; that stretch reads MKKIMLVFITLILVSLPIAQQTEA. 4 beta stranded membrane-spanning segments follow: residues 214–227, 234–243, 312–321, and 329–341; these read ESQLIAKFGTAFKA, VNFGAISEGK, STKVKAAFDA, and SGDVELTNIIKNS. The short motif at 483–493 is the Conserved undecapeptide element; sequence ECTGLAWEWWR. The Cholesterol binding motif lies at 515 to 516; that stretch reads TL.

The protein belongs to the cholesterol-dependent cytolysin family. In terms of assembly, homooligomeric pore complex of 35 to 50 subunits; when inserted in the host membrane.

It localises to the secreted. The protein localises to the host membrane. Its subcellular location is the host cell membrane. Its activity is regulated as follows. Activity of listeriolysin O is regulated on multiple levels. It should be high in the phagosome, thereby allowing escape of the bacteria from the phagosomal compartment. Then, once inside the host cytosol, the activity must be controlled to prevent lysis of the host plasma membrane and loss of the intracellular environment. A cholesterol-dependent toxin that causes cytolysis by forming pores in cholesterol containing host membranes. After binding to target membranes, the protein undergoes a major conformation change, leading to its insertion in the host membrane and formation of an oligomeric pore complex. Cholesterol is required for binding to host membranes, membrane insertion and pore formation; cholesterol binding is mediated by a Thr-Leu pair in the C-terminus. Acts as a major virulence factor required for the escape of bacteria from phagosomal vacuoles and entry into the host cytosol. Can be reversibly inactivated by oxidation. In Listeria monocytogenes serotype 4b (strain CLIP80459), this protein is Listeriolysin O (hly).